Consider the following 148-residue polypeptide: Glutaredoxin-C10 (148 aa).

Residues 16 to 55 are disordered; it reads TLDLTVHPPPPPPLPPPAPSTVSSSTASTSLSFDEEETSE. Pro residues predominate over residues 22-34; it reads HPPPPPPLPPPAP. Residues 35-47 show a composition bias toward low complexity; sequence STVSSSTASTSLS. The 93-residue stretch at 55 to 147 folds into the Glutaredoxin domain; it reads ESKIGRLISE…PRLVEVGALW (93 aa). A disulfide bond links cysteine 76 and cysteine 79.

This sequence belongs to the glutaredoxin family. CC-type subfamily.

The protein resides in the cytoplasm. Functionally, has a glutathione-disulfide oxidoreductase activity in the presence of NADPH and glutathione reductase. Reduces low molecular weight disulfides and proteins. The sequence is that of Glutaredoxin-C10 (GRXC10) from Arabidopsis thaliana (Mouse-ear cress).